A 115-amino-acid chain; its full sequence is Small ribosomal subunit protein uS13 (115 aa).

Residues 92-115 (RRGLPVRGQNTKNNARTRKGSKRK) form a disordered region. The span at 106–115 (ARTRKGSKRK) shows a compositional bias: basic residues.

Belongs to the universal ribosomal protein uS13 family. In terms of assembly, part of the 30S ribosomal subunit. Forms a loose heterodimer with protein S19. Forms two bridges to the 50S subunit in the 70S ribosome.

In terms of biological role, located at the top of the head of the 30S subunit, it contacts several helices of the 16S rRNA. In the 70S ribosome it contacts the 23S rRNA (bridge B1a) and protein L5 of the 50S subunit (bridge B1b), connecting the 2 subunits; these bridges are implicated in subunit movement. Contacts the tRNAs in the A and P-sites. This Lactobacillus gasseri (strain ATCC 33323 / DSM 20243 / BCRC 14619 / CIP 102991 / JCM 1131 / KCTC 3163 / NCIMB 11718 / NCTC 13722 / AM63) protein is Small ribosomal subunit protein uS13.